An 80-amino-acid chain; its full sequence is U-scoloptoxin(15)-Er1a (80 aa).

An N-terminal signal peptide occupies residues M1–S22.

It belongs to the scoloptoxin-15 family. In terms of processing, contains 2 disulfide bonds. In terms of tissue distribution, expressed by the venom gland.

It localises to the secreted. The protein is U-scoloptoxin(15)-Er1a of Ethmostigmus rubripes (Giant centipede).